The following is a 298-amino-acid chain: Acetylglutamate kinase (298 aa).

Substrate-binding positions include glycine 73–glycine 74, arginine 95, and asparagine 188.

The protein belongs to the acetylglutamate kinase family. ArgB subfamily.

Its subcellular location is the cytoplasm. The catalysed reaction is N-acetyl-L-glutamate + ATP = N-acetyl-L-glutamyl 5-phosphate + ADP. It participates in amino-acid biosynthesis; L-arginine biosynthesis; N(2)-acetyl-L-ornithine from L-glutamate: step 2/4. In terms of biological role, catalyzes the ATP-dependent phosphorylation of N-acetyl-L-glutamate. This chain is Acetylglutamate kinase, found in Nostoc punctiforme (strain ATCC 29133 / PCC 73102).